The sequence spans 212 residues: Leucine efflux protein (212 aa).

6 consecutive transmembrane segments (helical) span residues 12–32 (TYLV…LFVL), 49–69 (GVFI…ATLI), 71–91 (TTPI…LYLG), 122–142 (ILSL…VQFI), 153–173 (FFIL…FLII), and 188–208 (LAKV…ARLA).

The protein belongs to the Rht family.

The protein resides in the cell inner membrane. It carries out the reaction L-leucine(in) + H(+)(out) = L-leucine(out) + H(+)(in). Its activity is regulated as follows. Leucine export is inhibited by the proton ionophore carbonyl cyanide m-chlorophenylhydrazone (CCCP). Its function is as follows. Exporter of leucine. Can also transport its natural analog L-alpha-amino-n-butyric acid and some other structurally unrelated amino acids. Leucine excretion is probably driven by proton motive force. The polypeptide is Leucine efflux protein (Escherichia coli (strain K12)).